The following is a 383-amino-acid chain: MRSLALLCAVLALSDGITRLPLERGKKLREILREKGLLHHFLQHHRYDIGTKFPHAFPDVLTVVTEPLLNTLDMEYYGTISIGTPPQDFTVVFDTGSSNLWVPSVSCTSPACQSHQMFNPSQSSTYKSTGQNLSIHYGTGDMEGTVGCDTVTVASLMDTNQLFGLSTSEPGQFFVYVKFDGILGLGYPSLAADGITPVFDNMVNESLLEQNLFSVYLSREPMGSMVVFGGIDESYFTGSINWIPVSYQGYWQISMDSIIVNKQEIACSSGCQAIIDTGTSLVAGPASDINDIQSAVGANQNTYGEYSVNCSHILAMPDVVFVIGGIQYPVPALAYTEQNGQGTCMSSFQNSSADLWILGDVFIRVYYSIFDRANNRVGLAKAI.

An N-terminal signal peptide occupies residues 1 to 16; it reads MRSLALLCAVLALSDG. One can recognise a Peptidase A1 domain in the interval 76-380; that stretch reads YYGTISIGTP…DRANNRVGLA (305 aa). Asp94 is a catalytic residue. Cys107 and Cys112 are oxidised to a cystine. N-linked (GlcNAc...) asparagine glycosylation is found at Asn132 and Asn204. Cys267 and Cys271 are oxidised to a cystine. The active site involves Asp276. A glycan (N-linked (GlcNAc...) asparagine) is linked at Asn309. An intrachain disulfide couples Cys310 to Cys344. A glycan (N-linked (GlcNAc...) asparagine) is linked at Asn350.

The protein belongs to the peptidase A1 family.

This is Embryonic pepsinogen from Gallus gallus (Chicken).